Reading from the N-terminus, the 204-residue chain is ATP phosphoribosyltransferase (204 aa).

Belongs to the ATP phosphoribosyltransferase family. Short subfamily.

The protein localises to the cytoplasm. The enzyme catalyses 1-(5-phospho-beta-D-ribosyl)-ATP + diphosphate = 5-phospho-alpha-D-ribose 1-diphosphate + ATP. It functions in the pathway amino-acid biosynthesis; L-histidine biosynthesis; L-histidine from 5-phospho-alpha-D-ribose 1-diphosphate: step 1/9. In terms of biological role, catalyzes the condensation of ATP and 5-phosphoribose 1-diphosphate to form N'-(5'-phosphoribosyl)-ATP (PR-ATP). Has a crucial role in the pathway because the rate of histidine biosynthesis seems to be controlled primarily by regulation of HisG enzymatic activity. This Pyrococcus furiosus (strain ATCC 43587 / DSM 3638 / JCM 8422 / Vc1) protein is ATP phosphoribosyltransferase (hisG).